Reading from the N-terminus, the 301-residue chain is Outer membrane porin G (301 aa).

The first 21 residues, 1 to 21 (MKKLLPCTALVMCAGMACAQA), serve as a signal peptide directing secretion. 16 consecutive transmembrane segments (beta stranded) span residues 27–35 (WHFNIGAMY), 47–57 (MDGLAEPSVYF), 64–72 (WRIALAYYQ), 89–98 (RPELEVHYQF), 104–112 (FSFGLTGGF), 129–136 (NMQRWKIA), 149–158 (FNGWLSMYKF), 172–182 (VETETGLQYTF), 186–195 (VALRVNYYLE), 201–209 (DDSRNNGEF), 213–222 (EIRAYLPLTL), 230–238 (YTRIGLDRW), 240–248 (NWDWQDDIE), 254–265 (FNRVGLFYGYDF), 269–279 (LSVSLEYAFEW), and 289–300 (KFHYAGVGVNYS).

Monomer.

It is found in the cell outer membrane. Its function is as follows. Forms channels functionally larger than those of classical porins. In terms of biological role, may act as a regulator of the RCS-phosphorelay signal transduction pathway. The sequence is that of Outer membrane porin G (ompG) from Escherichia coli (strain K12).